The sequence spans 1485 residues: Putative E3 ubiquitin-protein ligase LIN-1 (1485 aa).

Acidic residues predominate over residues 337 to 353 (EENEDDSDSELENESVD). Disordered stretches follow at residues 337–363 (EENE…IFSP) and 384–417 (NQIP…KRDS). The region spanning 510–585 (KPPKDFVCPI…TSWKEQNPEL (76 aa)) is the U-box domain. WD repeat units follow at residues 1204-1241 (SSNG…PRVI), 1246-1283 (EHTK…IKCI), 1409-1448 (SLST…RVAS), and 1454-1485 (GHTK…WALD).

Expressed in roots and nodules, and at very low levels in calli and seedling shoots.

The enzyme catalyses S-ubiquitinyl-[E2 ubiquitin-conjugating enzyme]-L-cysteine + [acceptor protein]-L-lysine = [E2 ubiquitin-conjugating enzyme]-L-cysteine + N(6)-ubiquitinyl-[acceptor protein]-L-lysine.. Its pathway is protein modification; protein ubiquitination. Putative E3 ubiquitin-protein ligase involved in the rhizobial infection process. Plays an important role in the early steps of infection thread formation and in growth and differentiation of nodules. The chain is Putative E3 ubiquitin-protein ligase LIN-1 from Lotus japonicus (Lotus corniculatus var. japonicus).